We begin with the raw amino-acid sequence, 867 residues long: Nuclear cap-binding protein subunit 1 (867 aa).

The 220-residue stretch at 9–228 folds into the MIF4G domain; the sequence is LLRIGDRCPE…DLWERIQVLS (220 aa). The disordered stretch occupies residues 752-797; it reads SADGDVPNLRAGDPNVNSSARDPEATTMEIDNENGGDNDSQLNGQN. The span at 788-797 shows a compositional bias: polar residues; the sequence is DNDSQLNGQN.

It belongs to the NCBP1 family. Component of the nuclear cap-binding complex (CBC), a heterodimer composed of ABH1/CBP80 and CBP20 that interacts with m7GpppG-capped RNA.

The protein localises to the nucleus. The protein resides in the cytoplasm. In terms of biological role, component of the cap-binding complex (CBC), which binds cotranscriptionally to the 5'-cap of pre-mRNAs and is involved in various processes such as pre-mRNA splicing and RNA-mediated gene silencing (RNAi) by microRNAs (miRNAs). The CBC complex is involved in miRNA-mediated RNA interference and is required for primary miRNA processing. In the CBC complex, ABH1/CBP80 does not bind directly capped RNAs (m7GpppG-capped RNA) but is required to stabilize the movement of the N-terminal loop of CBP20 and lock the CBC into a high affinity cap-binding state with the cap structure. This is Nuclear cap-binding protein subunit 1 (ABH1) from Oryza sativa subsp. japonica (Rice).